Reading from the N-terminus, the 215-residue chain is MMQEIKAFNEKRAEIYWWLSSLFAKELTQEELDKYQSMEIRAFLTGLAENDALRPSVNAFVDALNRLVDRQDAQLELAADFCDLFLKTAKHGALPYASIYLTKDGLLNGEPAQKMDAWLKKHGVQVNQQLNEPADHLAIMLDFLGNLIIRSNELEQDRHMEEAFIEQNAFIQEMLLSWLPSFSQRAAEYDEFGFYNSAIKLLVAFCMLDSDYLVG.

It belongs to the TorD/DmsD family. TorD subfamily.

It is found in the cytoplasm. In terms of biological role, involved in the biogenesis of TorA. Acts on TorA before the insertion of the molybdenum cofactor and, as a result, probably favors a conformation of the apoenzyme that is competent for acquiring the cofactor. This chain is Chaperone protein TorD, found in Vibrio vulnificus (strain YJ016).